The following is a 266-amino-acid chain: ATP synthase subunit a (266 aa).

6 helical membrane passes run 38-58 (KQML…LLAA), 99-119 (LLFS…IPLI), 126-146 (HVGG…AIGV), 162-182 (GVPV…NFLV), 191-211 (LFAT…GIEY), and 224-244 (SVLV…IMAL).

The protein belongs to the ATPase A chain family. F-type ATPases have 2 components, CF(1) - the catalytic core - and CF(0) - the membrane proton channel. CF(1) has five subunits: alpha(3), beta(3), gamma(1), delta(1), epsilon(1). CF(0) has three main subunits: a(1), b(2) and c(9-12). The alpha and beta chains form an alternating ring which encloses part of the gamma chain. CF(1) is attached to CF(0) by a central stalk formed by the gamma and epsilon chains, while a peripheral stalk is formed by the delta and b chains.

The protein localises to the cell membrane. Its function is as follows. Key component of the proton channel; it plays a direct role in the translocation of protons across the membrane. In Arthrobacter sp. (strain FB24), this protein is ATP synthase subunit a.